Reading from the N-terminus, the 393-residue chain is Cysteine protease ATG4B (393 aa).

N-acetylmethionine is present on methionine 1. Position 34 is a phosphoserine (serine 34). The active-site Nucleophile is the cysteine 74. Position 189 is an S-nitrosocysteine (cysteine 189). Catalysis depends on residues aspartate 278 and histidine 280. S-nitrosocysteine is present on residues cysteine 292 and cysteine 301. Cysteine 292 and cysteine 361 are joined by a disulfide. 2 positions are modified to phosphoserine: serine 316 and serine 383. The LIR motif lies at 388–391; sequence FEIL. Serine 392 is modified (phosphoserine).

Belongs to the peptidase C54 family. As to quaternary structure, interacts with PFKP; promoting phosphorylation of ATG4B at Ser-34. Interacts with GBP7. Phosphorylation at Ser-383 and Ser-392 promotes autophagy by increasing protein delipidation activity without affecting proteolytic activation of ATG8 proteins. Phosphorylation at Ser-316 by ULK1 inhibits autophagy by decreasing both proteolytic activation and delipidation activities. Phosphorylation at Ser-316 is dephosphorylated by protein phosphatase 2A (PP2A). Phosphorylation at Ser-34 by AKT2 promotes its hydrolase activity, leading to increased proteolytic activation and delipidation of ATG8 family proteins. Phosphorylation at Ser-34 by AKT1 promotes mitochondrial localization and inhibition of the F1F0-ATP synthase activity, leading to elevation of mitochondrial reactive oxygen species (ROS). In terms of processing, ubiquitinated by RNF5, leading to its degradation by the proteasome. Post-translationally, S-nitrosylation at Cys-189 and Cys-292 in response to high glucose decreases both proteolytic activation and delipidation activities. O-glycosylated by OGT, leading to increase protease activity, thereby promoting the proteolytic activation of ATG8 family proteins. In terms of processing, forms reversible intrachain disulfide bonds in response to oxidative stress. Forms interchain disulfide bonds, leading to formation of homooligomers in response to oxidation.

Its subcellular location is the cytoplasm. It localises to the cytosol. The protein resides in the cytoplasmic vesicle. It is found in the autophagosome. The protein localises to the endoplasmic reticulum. Its subcellular location is the mitochondrion. It carries out the reaction [protein]-C-terminal L-amino acid-glycyl-phosphatidylethanolamide + H2O = [protein]-C-terminal L-amino acid-glycine + a 1,2-diacyl-sn-glycero-3-phosphoethanolamine. It catalyses the reaction [protein]-C-terminal L-amino acid-glycyl-phosphatidylserine + H2O = [protein]-C-terminal L-amino acid-glycine + a 1,2-diacyl-sn-glycero-3-phospho-L-serine. With respect to regulation, inhibited by N-ethylmaleimide. Redox-regulated during autophagy since reducing conditions activate ATG4A whereas an oxidizing environment such as the presence of H(2)O(2) inhibits its activity. The cysteine protease activity compounds is inhibited by styrylquinoline compounds 4-28 and LV-320. In terms of biological role, cysteine protease that plays a key role in autophagy by mediating both proteolytic activation and delipidation of ATG8 family proteins. Required for canonical autophagy (macroautophagy), non-canonical autophagy as well as for mitophagy. The protease activity is required for proteolytic activation of ATG8 family proteins: cleaves the C-terminal amino acid of ATG8 proteins MAP1LC3A, MAP1LC3B, MAP1LC3C, GABARAPL1, GABARAPL2 and GABARAP, to reveal a C-terminal glycine. Exposure of the glycine at the C-terminus is essential for ATG8 proteins conjugation to phosphatidylethanolamine (PE) and insertion to membranes, which is necessary for autophagy. Protease activity is also required to counteract formation of high-molecular weight conjugates of ATG8 proteins (ATG8ylation): acts as a deubiquitinating-like enzyme that removes ATG8 conjugated to other proteins, such as ATG3. In addition to the protease activity, also mediates delipidation of ATG8 family proteins. Catalyzes delipidation of PE-conjugated forms of ATG8 proteins during macroautophagy. Also involved in non-canonical autophagy, a parallel pathway involving conjugation of ATG8 proteins to single membranes at endolysosomal compartments, by catalyzing delipidation of ATG8 proteins conjugated to phosphatidylserine (PS). Compared to other members of the family (ATG4A, ATG4C or ATG4C), constitutes the major protein for proteolytic activation of ATG8 proteins, while it displays weaker delipidation activity than other ATG4 paralogs. Involved in phagophore growth during mitophagy independently of its protease activity and of ATG8 proteins: acts by regulating ATG9A trafficking to mitochondria and promoting phagophore-endoplasmic reticulum contacts during the lipid transfer phase of mitophagy. Its function is as follows. (Microbial infection) Mediates cleavage of an ATG8 protein homolog coded in the genome of cytopathogenic bovine viral diarrhea virus (BVDV). This Bos taurus (Bovine) protein is Cysteine protease ATG4B (ATG4B).